Here is a 507-residue protein sequence, read N- to C-terminus: Peroxisomal catalase (507 aa).

Catalysis depends on residues His-65 and Asn-138. Tyr-348 contributes to the heme binding site. A Microbody targeting signal motif is present at residues Ser-505 to Ile-507.

Belongs to the catalase family. Homotetramer. Heme serves as cofactor.

It is found in the peroxisome matrix. It carries out the reaction 2 H2O2 = O2 + 2 H2O. Functionally, catalyzes the degradation of hydrogen peroxide (H(2)O(2)) generated by peroxisomal oxidases to water and oxygen, thereby protecting cells from the toxic effects of hydrogen peroxide. In Pichia angusta (Yeast), this protein is Peroxisomal catalase (PXP9).